The following is a 139-amino-acid chain: UPF0251 protein Csac_0224 (139 aa).

This sequence belongs to the UPF0251 family.

In Caldicellulosiruptor saccharolyticus (strain ATCC 43494 / DSM 8903 / Tp8T 6331), this protein is UPF0251 protein Csac_0224.